Reading from the N-terminus, the 331-residue chain is Fe-S cluster assembly protein DRE2 (331 aa).

Residues 1–146 are N-terminal SAM-like domain; it reads MSEILLLLHP…MPTFKKPVSS (146 aa). The segment at 142–164 is disordered; sequence KPVSSPVTLTDTSANNTDAEDDL. The span at 146–158 shows a compositional bias: polar residues; the sequence is SPVTLTDTSANNT. A linker region spans residues 147-202; it reads PVTLTDTSANNTDAEDDLSMKRKLDSTKLAYFSDDSSGEEDDLIDENELIADSHKF. Positions 212, 224, 227, and 229 each coordinate [2Fe-2S] cluster. The tract at residues 212–229 is fe-S binding site A; that stretch reads CELPNGKKRKKACKDCTC. The [4Fe-4S] cluster site is built by Cys294, Cys297, Cys305, and Cys308. 2 consecutive short sequence motifs (cx2C motif) follow at residues 294–297 and 305–308; these read CSSC and CDGC. The segment at 294–308 is fe-S binding site B; that stretch reads CSSCALGDAFRCDGC.

This sequence belongs to the anamorsin family. Monomer. Interacts with TAH18. Interacts with MIA40. It depends on [2Fe-2S] cluster as a cofactor. [4Fe-4S] cluster is required as a cofactor.

Its subcellular location is the cytoplasm. The protein localises to the mitochondrion intermembrane space. In terms of biological role, component of the cytosolic iron-sulfur (Fe-S) protein assembly (CIA) machinery required for the maturation of extramitochondrial Fe-S proteins. Part of an electron transfer chain functioning in an early step of cytosolic Fe-S biogenesis, facilitating the de novo assembly of a [4Fe-4S] cluster on the scaffold complex CFD1-NBP35. Electrons are transferred to DRE2 from NADPH via the FAD- and FMN-containing protein TAH18. TAH18-DRE2 are also required for the assembly of the diferric tyrosyl radical cofactor of ribonucleotide reductase (RNR), probably by providing electrons for reduction during radical cofactor maturation in the catalytic small subunit RNR2. In Clavispora lusitaniae (strain ATCC 42720) (Yeast), this protein is Fe-S cluster assembly protein DRE2.